The primary structure comprises 354 residues: UDP-N-acetylglucosamine--N-acetylmuramyl-(pentapeptide) pyrophosphoryl-undecaprenol N-acetylglucosamine transferase (354 aa).

UDP-N-acetyl-alpha-D-glucosamine contacts are provided by residues 11–13, Arg-164, Ser-194, and Gln-289; that span reads TAG.

This sequence belongs to the glycosyltransferase 28 family. MurG subfamily.

The protein resides in the cell membrane. It carries out the reaction di-trans,octa-cis-undecaprenyl diphospho-N-acetyl-alpha-D-muramoyl-L-alanyl-D-glutamyl-meso-2,6-diaminopimeloyl-D-alanyl-D-alanine + UDP-N-acetyl-alpha-D-glucosamine = di-trans,octa-cis-undecaprenyl diphospho-[N-acetyl-alpha-D-glucosaminyl-(1-&gt;4)]-N-acetyl-alpha-D-muramoyl-L-alanyl-D-glutamyl-meso-2,6-diaminopimeloyl-D-alanyl-D-alanine + UDP + H(+). The protein operates within cell wall biogenesis; peptidoglycan biosynthesis. Its function is as follows. Cell wall formation. Catalyzes the transfer of a GlcNAc subunit on undecaprenyl-pyrophosphoryl-MurNAc-pentapeptide (lipid intermediate I) to form undecaprenyl-pyrophosphoryl-MurNAc-(pentapeptide)GlcNAc (lipid intermediate II). The sequence is that of UDP-N-acetylglucosamine--N-acetylmuramyl-(pentapeptide) pyrophosphoryl-undecaprenol N-acetylglucosamine transferase from Clostridium botulinum (strain Langeland / NCTC 10281 / Type F).